We begin with the raw amino-acid sequence, 85 residues long: Dynein light chain 1, cytoplasmic (85 aa).

Belongs to the dynein light chain family. As to quaternary structure, homodimer. Cytoplasmic dynein consists of two catalytic heavy chains (HCs) and a number of non-catalytic subunits which present intermediate chains (ICs), light intermediate chains (LICs) and light chains (LCs). Component of the nuclear pore complex (NPC). NPC constitutes the exclusive means of nucleocytoplasmic transport. NPCs allow the passive diffusion of ions and small molecules and the active, nuclear transport receptor-mediated bidirectional transport of macromolecules such as proteins, RNAs, ribonucleoparticles (RNPs), and ribosomal subunits across the nuclear envelope. Due to its 8-fold rotational symmetry, all subunits are present with 8 copies or multiples thereof.

The protein resides in the cytoplasm. It is found in the cytoskeleton. It localises to the nucleus. The protein localises to the nuclear pore complex. In terms of biological role, acts as one of several non-catalytic accessory components of the cytoplasmic dynein complex that are thought to be involved in linking dynein to cargos and to adapter proteins that regulate dynein function. Cytoplasmic dynein 1 acts as a motor for the intracellular retrograde motility of vesicles and organelles along microtubules. May play a role in changing or maintaining the spatial distribution of cytoskeletal structures. Also a component of the nuclear pore complex. The polypeptide is Dynein light chain 1, cytoplasmic (dlc2) (Schizosaccharomyces pombe (strain 972 / ATCC 24843) (Fission yeast)).